We begin with the raw amino-acid sequence, 410 residues long: Serine hydroxymethyltransferase (410 aa).

(6S)-5,6,7,8-tetrahydrofolate-binding positions include Leu119 and 123–125; that span reads GHL. Lys228 bears the N6-(pyridoxal phosphate)lysine mark. Residue 351 to 353 participates in (6S)-5,6,7,8-tetrahydrofolate binding; sequence SPF.

Belongs to the SHMT family. As to quaternary structure, homodimer. Pyridoxal 5'-phosphate serves as cofactor.

The protein resides in the cytoplasm. The catalysed reaction is (6R)-5,10-methylene-5,6,7,8-tetrahydrofolate + glycine + H2O = (6S)-5,6,7,8-tetrahydrofolate + L-serine. It functions in the pathway one-carbon metabolism; tetrahydrofolate interconversion. Its pathway is amino-acid biosynthesis; glycine biosynthesis; glycine from L-serine: step 1/1. In terms of biological role, catalyzes the reversible interconversion of serine and glycine with tetrahydrofolate (THF) serving as the one-carbon carrier. This reaction serves as the major source of one-carbon groups required for the biosynthesis of purines, thymidylate, methionine, and other important biomolecules. Also exhibits THF-independent aldolase activity toward beta-hydroxyamino acids, producing glycine and aldehydes, via a retro-aldol mechanism. The chain is Serine hydroxymethyltransferase from Alkaliphilus oremlandii (strain OhILAs) (Clostridium oremlandii (strain OhILAs)).